The primary structure comprises 295 residues: Release factor glutamine methyltransferase (295 aa).

S-adenosyl-L-methionine contacts are provided by residues 127 to 131 (GTGSG), Asp150, Phe179, and Asn195. Residue 195 to 198 (NPPY) participates in substrate binding.

It belongs to the protein N5-glutamine methyltransferase family. PrmC subfamily.

It carries out the reaction L-glutaminyl-[peptide chain release factor] + S-adenosyl-L-methionine = N(5)-methyl-L-glutaminyl-[peptide chain release factor] + S-adenosyl-L-homocysteine + H(+). In terms of biological role, methylates the class 1 translation termination release factors RF1/PrfA and RF2/PrfB on the glutamine residue of the universally conserved GGQ motif. This is Release factor glutamine methyltransferase from Nitratidesulfovibrio vulgaris (strain ATCC 29579 / DSM 644 / CCUG 34227 / NCIMB 8303 / VKM B-1760 / Hildenborough) (Desulfovibrio vulgaris).